The chain runs to 375 residues: Peptidyl-prolyl cis-trans isomerase D (375 aa).

The PPIase cyclophilin-type domain occupies 7–169; that stretch reads YFDITIANEP…QAVTISSAGV (163 aa). TPR repeat units lie at residues 217–250, 270–307, and 312–345; these read AGKLKEVGTKEFKAGNFAVALDKYQKALRYLDVH, LPLLTNAALCALKLPASPNTSSLVVSLTSRALTLPNLS, and GKALYRRAQAYVLKKDDEAAEKDLKGALECVPGD.

It belongs to the cyclophilin-type PPIase family. PPIase D subfamily.

The protein resides in the cytoplasm. It carries out the reaction [protein]-peptidylproline (omega=180) = [protein]-peptidylproline (omega=0). Functionally, PPIases accelerate the folding of proteins. It catalyzes the cis-trans isomerization of proline imidic peptide bonds in oligopeptides. In Cryptococcus neoformans var. neoformans serotype D (strain JEC21 / ATCC MYA-565) (Filobasidiella neoformans), this protein is Peptidyl-prolyl cis-trans isomerase D (CPR6).